Here is a 339-residue protein sequence, read N- to C-terminus: MADLKPYIAKAASGEPLPLGDAKAAFDIMMSGQATPSQIGGFLMALRVRGETVPEIAGAVASMRSRMIPVIAPDDAMDIVGTGGDQSGSYNVSSCTAFVVAGAGVPVAKHGNRALSSRSGAADALAALGINIEADADTIGRSISEAGLGFMFAPMHHSAMRHVGPSRVELGTRTIFNLLGPLSNPASVKRQLVGVFAPQWLEPLAHVLKELGSETAWVVYGDGLDEMTTAGTTQVAALENGQIRTFEITPEEVGLRRCSPAELKGGEAAENAKALLGVLEGKDSAYRDIVLLNSGAALVVAGKAENLKDGIAQAVQSIDSGAALAVLQKVIAVSNDKPA.

5-phospho-alpha-D-ribose 1-diphosphate-binding positions include Gly-81, 84 to 85 (GD), Ser-89, 91 to 94 (NVSS), 109 to 117 (KHGNRALSS), and Ala-121. Residue Gly-81 coordinates anthranilate. Ser-93 lines the Mg(2+) pocket. Asn-112 is an anthranilate binding site. An anthranilate-binding site is contributed by Arg-167. Residues Asp-225 and Glu-226 each coordinate Mg(2+).

Belongs to the anthranilate phosphoribosyltransferase family. In terms of assembly, homodimer. The cofactor is Mg(2+).

The catalysed reaction is N-(5-phospho-beta-D-ribosyl)anthranilate + diphosphate = 5-phospho-alpha-D-ribose 1-diphosphate + anthranilate. It functions in the pathway amino-acid biosynthesis; L-tryptophan biosynthesis; L-tryptophan from chorismate: step 2/5. Catalyzes the transfer of the phosphoribosyl group of 5-phosphorylribose-1-pyrophosphate (PRPP) to anthranilate to yield N-(5'-phosphoribosyl)-anthranilate (PRA). The sequence is that of Anthranilate phosphoribosyltransferase from Brucella abortus (strain S19).